Reading from the N-terminus, the 1006-residue chain is Phosphatidylinositol 4,5-bisphosphate 5-phosphatase A (1006 aa).

Residues 1 to 416 (MEGQSSRGSR…SSSPWSAQPT (416 aa)) form a disordered region. Polar residues predominate over residues 27-41 (VAQTGAPSKVDSSFQ). R56 bears the Asymmetric dimethylarginine; alternate mark. R56 carries the post-translational modification Omega-N-methylarginine; alternate. R65 is subject to Omega-N-methylarginine. R76 is modified (asymmetric dimethylarginine). R83 carries the post-translational modification Asymmetric dimethylarginine; alternate. The residue at position 83 (R83) is an Omega-N-methylarginine; alternate. Polar residues predominate over residues 94-112 (GQKTATAHRSSSLAPTSVG). The short motif at 102 to 107 (RSSSLA) is the RSXSXX motif 1 element. Residues 180–193 (LAASGLSLALASEE) show a composition bias toward low complexity. Residues 196–209 (PELPSTPSPVPSPV) show a composition bias toward pro residues. A compositionally biased stretch (low complexity) spans 210–234 (LSPTQEQALAPASTASGAASVGQTS). The span at 256-273 (PAQTSGPTGSPPCIQTSP) shows a compositional bias: polar residues. Phosphoserine occurs at positions 291 and 324. The span at 337–347 (VPPPLPKPPRS) shows a compositional bias: pro residues. The SH3-binding motif lies at 345–350 (PRSPSR). Low complexity-rich tracts occupy residues 348–360 (PSRS…NRSP) and 398–409 (TTSSSTSTLSSS). An RSXSXX motif 2 motif is present at residues 350 to 355 (RSPSHS). A catalytic region spans residues 425 to 728 (ITVVTWNVGT…SDHKPVAAQF (304 aa)). The required for ruffle localization stretch occupies residues 729 to 840 (LLQFAFRDDM…IGITEPFQIS (112 aa)). Residues 844-858 (SELASSSTDSSGTSS) show a composition bias toward low complexity. A disordered region spans residues 844–1006 (SELASSSTDS…RGLEEGGLGP (163 aa)). Short sequence motifs (RSXSXX motif) lie at residues 874-879 (RSPSPG) and 885-890 (RSRSPG). S903 carries the post-translational modification Phosphoserine. The short motif at 911–916 (RSPSPQ) is the RSXSXX motif 5 element. Positions 927-946 (RSSNGSSRGSSEEGPSGLPG) are enriched in low complexity. S990 carries the post-translational modification Phosphoserine.

Belongs to the inositol 1,4,5-trisphosphate 5-phosphatase type II family.

The protein resides in the cytoplasm. The catalysed reaction is 1D-myo-inositol 1,4,5-trisphosphate + H2O = 1D-myo-inositol 1,4-bisphosphate + phosphate. It carries out the reaction 1D-myo-inositol 1,3,4,5-tetrakisphosphate + H2O = 1D-myo-inositol 1,3,4-trisphosphate + phosphate. The enzyme catalyses a 1,2-diacyl-sn-glycero-3-phospho-(1D-myo-inositol-4,5-bisphosphate) + H2O = a 1,2-diacyl-sn-glycero-3-phospho-(1D-myo-inositol 4-phosphate) + phosphate. Inositol 5-phosphatase, which converts inositol 1,4,5-trisphosphate to inositol 1,4-bisphosphate. Also converts phosphatidylinositol 4,5-bisphosphate to phosphatidylinositol 4-phosphate and inositol 1,3,4,5-tetrakisphosphate to inositol 1,3,4-trisphosphate in vitro. May be involved in modulation of the function of inositol and phosphatidylinositol polyphosphate-binding proteins that are present at membranes ruffles. This chain is Phosphatidylinositol 4,5-bisphosphate 5-phosphatase A (INPP5J), found in Homo sapiens (Human).